We begin with the raw amino-acid sequence, 292 residues long: Coatomer subunit epsilon (292 aa).

The protein belongs to the COPE family. Oligomeric complex that consists of at least the alpha, beta, beta', gamma, delta, epsilon and zeta subunits.

It localises to the cytoplasm. The protein resides in the golgi apparatus membrane. It is found in the cytoplasmic vesicle. The protein localises to the COPI-coated vesicle membrane. In terms of biological role, the coatomer is a cytosolic protein complex that binds to dilysine motifs and reversibly associates with Golgi non-clathrin-coated vesicles, which further mediate biosynthetic protein transport from the ER, via the Golgi up to the trans Golgi network. The coatomer complex is required for budding from Golgi membranes, and is essential for the retrograde Golgi-to-ER transport of dilysine-tagged proteins. This Caenorhabditis elegans protein is Coatomer subunit epsilon (cope-1).